The chain runs to 665 residues: non-specific serine/threonine protein kinase (665 aa).

The Protein kinase domain maps to 145–597; it reads FDVHCRIGSG…AEEALKHPFF (453 aa). ATP is bound by residues 151–159 and Lys-181; that span reads IGSGTFSTV. The Proton acceptor role is filled by Asp-268.

Belongs to the protein kinase superfamily. Ser/Thr protein kinase family. As to quaternary structure, interacts with chif (via N-terminus).

The enzyme catalyses L-seryl-[protein] + ATP = O-phospho-L-seryl-[protein] + ADP + H(+). It carries out the reaction L-threonyl-[protein] + ATP = O-phospho-L-threonyl-[protein] + ADP + H(+). In terms of biological role, probable serine/threonine protein kinase that forms a complex with the N-terminal peptide of the chiffon protein and may be involved in regulating meiotic processes in the male testis. This Drosophila melanogaster (Fruit fly) protein is non-specific serine/threonine protein kinase.